The chain runs to 602 residues: Protein indeterminate-domain 5, chloroplastic (602 aa).

Composition is skewed to low complexity over residues 1–10 and 21–30; these read MAASSSSAAS and HLLPPNSSAA. A chloroplast-targeting transit peptide spans 1–50; sequence MAASSSSAASFFGVRQDDQSHLLPPNSSAAAPPPPPPHHQAPLPPLEAPP. A disordered region spans residues 1-65; sequence MAASSSSAAS…NQPRTPNSDA (65 aa). Pro residues predominate over residues 31-48; sequence APPPPPPHHQAPLPPLEA. The residue at position 60 (threonine 60) is a Phosphothreonine. At serine 71 the chain carries Phosphoserine. C2H2-type zinc fingers lie at residues 81 to 103 and 122 to 152; these read FICE…RRGH and YLCP…YRKH. The segment at 157–180 adopts a C2H2-type 2; degenerate zinc-finger fold; it reads WKCDKCSKRYAVQSDWKAHSKTCG. Zn(2+) contacts are provided by cysteine 159, cysteine 162, histidine 175, cysteine 179, cysteine 186, cysteine 188, histidine 201, and cysteine 205. Residues 184–207 form a CCHC-type 2; atypical zinc finger; sequence YRCDCGTLFSRRDSFITHRAFCDA. The interval 194–206 is SHR-binding; sequence RRDSFITHRAFCD. Disordered stretches follow at residues 443-467 and 537-602; these read KAAQ…NNAS and KSMS…HASF. 3 stretches are compositionally biased toward low complexity: residues 448–467, 546–560, and 570–579; these read GSTS…NNAS, QQQQ…QQQQ, and SSSDSADRSS.

In terms of assembly, binds to RGA and SCL3 competitively. Highly expressed in leaf tissues.

It localises to the plastid. It is found in the chloroplast. Transcription factor acting as a positive regulator of the starch synthase SS4. Controls chloroplast development and starch granule formation. Binds DNA via its zinc fingers. Recognizes and binds to SCL3 promoter sequence 5'-AGACAA-3' to promote its expression when in complex with RGA. This chain is Protein indeterminate-domain 5, chloroplastic, found in Arabidopsis thaliana (Mouse-ear cress).